The chain runs to 93 residues: Small ribosomal subunit protein uS19 (93 aa).

Belongs to the universal ribosomal protein uS19 family.

Its function is as follows. Protein S19 forms a complex with S13 that binds strongly to the 16S ribosomal RNA. The polypeptide is Small ribosomal subunit protein uS19 (Maridesulfovibrio salexigens (strain ATCC 14822 / DSM 2638 / NCIMB 8403 / VKM B-1763) (Desulfovibrio salexigens)).